A 1187-amino-acid chain; its full sequence is Roquin-2 (1187 aa).

Zn(2+)-binding residues include cysteine 14, cysteine 17, cysteine 33, histidine 35, cysteine 38, cysteine 50, and aspartate 53. The segment at 14–54 (CPICYNEFDENVHKPISLGCSHTVCKTCLNKLHRKACPFDQ) adopts an RING-type; degenerate zinc-finger fold. An HEPN-N region spans residues 91–170 (ENKHYEVAKK…RTVTELILQH (80 aa)). The tract at residues 171–325 (QNPQQLSANL…SIIDKLQSPE (155 aa)) is ROQ. Residues 326-396 (SFAKSVQELT…GLVDFIQNYS (71 aa)) form an HEPN-C region. The C3H1-type zinc finger occupies 410-438 (KYKTSMCRDLRQQGGCPRGTNCTFAHSQE). 2 disordered regions span residues 527-571 (VGTN…GTEL) and 640-677 (NVPESSLPPASMPYADHYSTFSPRDRMNSSPYQPPPPQ). Residues 529–545 (TNAQNAGPSAESVSENK) show a composition bias toward polar residues. Serine 548 carries the phosphoserine modification. Polar residues predominate over residues 553–571 (PVSNAAATSAGPSNFGTEL). Residues serine 806, serine 981, and serine 1115 each carry the phosphoserine modification.

As to quaternary structure, interacts with EDC4. Interacts with CCR4-NOT deadenylase complex. Interacts with MAP3K5; the interaction is probably stimulus-dependent. In terms of processing, proteolytically cleaved by MALT1 in activated CD4(+) T cells; cleavage at Arg-509 is critical for promoting RC3H1 degradation in response to T-cell receptor (TCR) stimulation, and hence is necessary for prolonging the stability of a set of mRNAs controlling Th17 cell differentiation. Highest levels in lymph node and thymus and slightly lesser amounts in brain, lung, and spleen (at protein level). Very weak expression in heart, muscle, and kidney (at protein level). Expressed in CD4(+) helper T-cells (at protein level).

The protein localises to the cytoplasm. It is found in the P-body. It carries out the reaction S-ubiquitinyl-[E2 ubiquitin-conjugating enzyme]-L-cysteine + [acceptor protein]-L-lysine = [E2 ubiquitin-conjugating enzyme]-L-cysteine + N(6)-ubiquitinyl-[acceptor protein]-L-lysine.. Its pathway is protein modification; protein ubiquitination. With respect to regulation, binding to dsRNA, but not CDE RNA, crosstalks with the E3 ubiquitin ligase activity and may inhibit ubiquitination. Functionally, post-transcriptional repressor of mRNAs containing a conserved stem loop motif, called constitutive decay element (CDE), which is often located in the 3'-UTR, as in HMGXB3, ICOS, IER3, NFKBID, NFKBIZ, PPP1R10, TNF and in many more mRNAs. Binds to CDE and promotes mRNA deadenylation and degradation. This process does not involve miRNAs. In follicular helper T (Tfh) cells, represses of ICOS and TNFRSF4 expression, thus preventing spontaneous Tfh cell differentiation, germinal center B-cell differentiation in the absence of immunization and autoimmunity. In resting or LPS-stimulated macrophages, controls inflammation by suppressing TNF expression. Also recognizes CDE in its own mRNA and in that of paralogous RC3H1, possibly leading to feedback loop regulation. Inhibits cooperatively with ZC3H12A the differentiation of helper T cells Th17 in lungs. They repress target mRNA encoding the Th17 cell-promoting factors IL6, ICOS, REL, IRF4, NFKBID and NFKBIZ. The cooperation requires RNA-binding by RC3H1 and the nuclease activity of ZC3H12A. miRNA-binding protein that regulates microRNA homeostasis. Enhances DICER-mediated processing of pre-MIR146a but reduces mature MIR146a levels through an increase of 3' end uridylation. Both inhibits ICOS mRNA expression and they may act together to exert the suppression. Acts as a ubiquitin E3 ligase. Pairs with E2 enzymes UBE2B, UBE2D2, UBE2E2, UBE2E3, UBE2G2, UBE2K and UBE2Q2 and produces polyubiquitin chains. Shows the strongest activity when paired with UBE2N:UBE2V1 or UBE2N:UBE2V2 E2 complexes and generate both short and long polyubiquitin chains. Involved in the ubiquitination of MAP3K5. Able to interact with double-stranded RNA (dsRNA). The sequence is that of Roquin-2 (Rc3h2) from Mus musculus (Mouse).